The sequence spans 41 residues: Large ribosomal subunit protein bL36 (41 aa).

Belongs to the bacterial ribosomal protein bL36 family.

In Vibrio vulnificus (strain YJ016), this protein is Large ribosomal subunit protein bL36.